A 444-amino-acid polypeptide reads, in one-letter code: Transcription activator AKTR-3 (444 aa).

Residues 16–43 (CDFCTQSKLRCNKNKPSCRRCTIQQQPC) constitute a DNA-binding region (zn(2)-C6 fungal-type). Residues 49-89 (RRTGRPPKHPRTANDCQEANGQHGEQDPVTSTPGGSCQQQS) form a disordered region. Basic residues predominate over residues 50 to 59 (RTGRPPKHPR). The segment covering 76–89 (PVTSTPGGSCQQQS) has biased composition (polar residues).

The protein localises to the nucleus. Functionally, transcription factor that regulates the expression of the gene clusters that mediate the biosynthesis of the host-selective toxins (HSTs) AK-toxins responsible for Japanese pear black spot disease by the Japanese pear pathotype. AK-toxins are esters of 9,10-epoxy 8-hydroxy 9-methyldecatrienoic acid (EDA). On cellular level, AK-toxins affect plasma membrane of susceptible cells and cause a sudden increase in loss of K(+) after a few minutes of toxin treatment. This chain is Transcription activator AKTR-3, found in Alternaria alternata (Alternaria rot fungus).